Reading from the N-terminus, the 315-residue chain is Ribose-phosphate pyrophosphokinase (315 aa).

Residues 37-39 (DGE) and 96-97 (RQ) each bind ATP. Positions 131 and 170 each coordinate Mg(2+). Residue Lys-194 is part of the active site. Residues Arg-196, Asp-220, and 224 to 228 (DTGGT) contribute to the D-ribose 5-phosphate site.

This sequence belongs to the ribose-phosphate pyrophosphokinase family. Class I subfamily. As to quaternary structure, homohexamer. Mg(2+) serves as cofactor.

The protein localises to the cytoplasm. It catalyses the reaction D-ribose 5-phosphate + ATP = 5-phospho-alpha-D-ribose 1-diphosphate + AMP + H(+). It functions in the pathway metabolic intermediate biosynthesis; 5-phospho-alpha-D-ribose 1-diphosphate biosynthesis; 5-phospho-alpha-D-ribose 1-diphosphate from D-ribose 5-phosphate (route I): step 1/1. Involved in the biosynthesis of the central metabolite phospho-alpha-D-ribosyl-1-pyrophosphate (PRPP) via the transfer of pyrophosphoryl group from ATP to 1-hydroxyl of ribose-5-phosphate (Rib-5-P). The polypeptide is Ribose-phosphate pyrophosphokinase (Buchnera aphidicola subsp. Schizaphis graminum (strain Sg)).